The primary structure comprises 327 residues: DNA-directed RNA polymerase subunit alpha (327 aa).

Residues 1–233 (MVREKVKVST…NLFIPFLHVE (233 aa)) are alpha N-terminal domain (alpha-NTD). Residues 267–327 (LAFQYIFIDQ…KKILDILEKK (61 aa)) are alpha C-terminal domain (alpha-CTD).

Belongs to the RNA polymerase alpha chain family. In plastids the minimal PEP RNA polymerase catalytic core is composed of four subunits: alpha, beta, beta', and beta''. When a (nuclear-encoded) sigma factor is associated with the core the holoenzyme is formed, which can initiate transcription.

Its subcellular location is the plastid. It is found in the chloroplast. It catalyses the reaction RNA(n) + a ribonucleoside 5'-triphosphate = RNA(n+1) + diphosphate. In terms of biological role, DNA-dependent RNA polymerase catalyzes the transcription of DNA into RNA using the four ribonucleoside triphosphates as substrates. This Lobularia maritima (Sweet alyssum) protein is DNA-directed RNA polymerase subunit alpha.